Reading from the N-terminus, the 323-residue chain is MSNYDALYSQLVAMGQERWAEQLQATLPDKLALESTAKMAGWQSAMQSLPEIRPSRIELKENVTIGTSDDLGDINREELIALLQAFHPWRKGPYNFFGIEIDTEWRSDWKWERLLPHIQPLAGRRVLDVGCGNGYHGWRMRGAGADFVLGIDPFLLSVQQFQVMQRYLRDPQHHVIPIGIEEVPPNLACFDSVFSMGVLYHRRSPLDHLFELKGCLRPGGELILETLIVEGKRETIFMPPGRYAKMRNVWFIPSIEAMTLWLERCGFTDIGCVDTNRTSREEQRSTGWMRFESLADFLDPNDAEKTIEGHPAPLRAIFTATKL.

Carboxy-S-adenosyl-L-methionine-binding positions include Lys-91, Trp-105, Lys-110, Gly-130, 180-181 (IE), Met-196, Tyr-200, and Arg-315.

It belongs to the class I-like SAM-binding methyltransferase superfamily. CmoB family. Homotetramer.

The enzyme catalyses carboxy-S-adenosyl-L-methionine + 5-hydroxyuridine(34) in tRNA = 5-carboxymethoxyuridine(34) in tRNA + S-adenosyl-L-homocysteine + H(+). Its function is as follows. Catalyzes carboxymethyl transfer from carboxy-S-adenosyl-L-methionine (Cx-SAM) to 5-hydroxyuridine (ho5U) to form 5-carboxymethoxyuridine (cmo5U) at position 34 in tRNAs. The protein is tRNA U34 carboxymethyltransferase of Geobacter sp. (strain M21).